Reading from the N-terminus, the 77-residue chain is Acyl carrier protein (77 aa).

Positions methionine 1 to glutamate 76 constitute a Carrier domain. Serine 36 carries the post-translational modification O-(pantetheine 4'-phosphoryl)serine.

This sequence belongs to the acyl carrier protein (ACP) family. In terms of processing, 4'-phosphopantetheine is transferred from CoA to a specific serine of apo-ACP by AcpS. This modification is essential for activity because fatty acids are bound in thioester linkage to the sulfhydryl of the prosthetic group.

Its subcellular location is the cytoplasm. It functions in the pathway lipid metabolism; fatty acid biosynthesis. Its function is as follows. Carrier of the growing fatty acid chain in fatty acid biosynthesis. In Staphylococcus epidermidis (strain ATCC 12228 / FDA PCI 1200), this protein is Acyl carrier protein.